The sequence spans 151 residues: Putative pre-16S rRNA nuclease (151 aa).

The protein belongs to the YqgF nuclease family.

The protein resides in the cytoplasm. Functionally, could be a nuclease involved in processing of the 5'-end of pre-16S rRNA. The chain is Putative pre-16S rRNA nuclease from Nostoc sp. (strain PCC 7120 / SAG 25.82 / UTEX 2576).